Reading from the N-terminus, the 214-residue chain is Osteoclast-stimulating factor 1 (214 aa).

The residue at position 2 (serine 2) is an N-acetylserine. Residues 12–71 enclose the SH3 domain; the sequence is GQVKVFRALYTFEPRTPDELYFEEGDIIYITDMSDTNWWKGTSKGRTGLIPSNYVAEQAE. 3 ANK repeats span residues 72 to 101, 105 to 135, and 139 to 168; these read SIDN…GVNG, AGST…ELNQ, and LGDT…RTDL. Residue threonine 200 is modified to Phosphothreonine. Phosphoserine occurs at positions 202 and 213.

Interacts with SRC and SMN1. Interacts with FASLG.

It localises to the cytoplasm. Its function is as follows. Induces bone resorption, acting probably through a signaling cascade which results in the secretion of factor(s) enhancing osteoclast formation and activity. This chain is Osteoclast-stimulating factor 1 (OSTF1), found in Sus scrofa (Pig).